The chain runs to 81 residues: Protein Vpu (81 aa).

At 1-6 (MQPIQI) the chain is on the extracellular side. Residues 7–27 (AIAALVVAIIIAIVVWSIVII) form a helical membrane-spanning segment. Topologically, residues 28 to 81 (EYRKILRQRKIDRLIDRLIERAEDSGNESEGEISALVEMGVEMGHHAPWDIDDL) are cytoplasmic. 2 positions are modified to phosphoserine; by host CK2: serine 52 and serine 56.

It belongs to the HIV-1 VPU protein family. As to quaternary structure, homopentamer. Interacts with host CD4 and BRTC; these interactions induce proteasomal degradation of CD4. Interacts with host BST2; this interaction leads to the degradation of host BST2. Interacts with host FBXW11. Interacts with host AP1M1; this interaction plays a role in the mistrafficking and subsequent degradation of host BST2. Interacts with host RANBP2; this interaction allows Vpu to down-regulate host BLM sumoylation. Phosphorylated by host CK2. This phosphorylation is necessary for interaction with human BTRC and degradation of CD4.

The protein resides in the host membrane. With respect to regulation, ion channel activity is inhibited by hexamethylene amiloride in vitro. Functionally, enhances virion budding by targeting host CD4 and Tetherin/BST2 to proteasome degradation. Degradation of CD4 prevents any unwanted premature interactions between viral Env and its host receptor CD4 in the endoplasmic reticulum. Degradation of antiretroviral protein Tetherin/BST2 is important for virion budding, as BST2 tethers new viral particles to the host cell membrane. Mechanistically, Vpu bridges either CD4 or BST2 to BTRC, a substrate recognition subunit of the Skp1/Cullin/F-box protein E3 ubiquitin ligase, induces their ubiquitination and subsequent proteasomal degradation. The alteration of the E3 ligase specificity by Vpu seems to promote the degradation of host IKBKB, leading to NF-kappa-B down-regulation and subsequent apoptosis. Acts as a viroporin that forms an oligomeric ion channel in membranes. Modulates the host DNA repair mechanisms to promote degradation of nuclear viral cDNA in cells that are already productively infected in order to suppress immune sensing and proviral hyper-integration (superinfection). Manipulates PML-NBs and modulates SUMOylation of host BLM protein thereby enhancing its DNA-end processing activity toward viral unintegrated linear DNA. Also inhibits RAD52-mediated homologous repair of viral cDNA, preventing the generation of dead-end circular forms of single copies of the long terminal repeat and permitting sustained nucleolytic attack. The chain is Protein Vpu from Homo sapiens (Human).